Reading from the N-terminus, the 140-residue chain is Actin-depolymerizing factor 10 (140 aa).

Position 6 is a phosphoserine (serine 6). In terms of domain architecture, ADF-H spans 7 to 139 (GMHVSDECKL…SLDIIKGRVN (133 aa)).

Belongs to the actin-binding proteins ADF family.

The protein localises to the cytoplasm. The protein resides in the cytoskeleton. Its function is as follows. Actin-depolymerizing protein. Severs actin filaments (F-actin) and binds to actin monomers. This chain is Actin-depolymerizing factor 10 (ADF10), found in Arabidopsis thaliana (Mouse-ear cress).